The following is a 79-amino-acid chain: RNA-binding protein Hfq (79 aa).

In terms of domain architecture, Sm spans 10-70 (DAFLNHVRKT…ISTIMPAQPI (61 aa)).

Belongs to the Hfq family. In terms of assembly, homohexamer.

In terms of biological role, RNA chaperone that binds small regulatory RNA (sRNAs) and mRNAs to facilitate mRNA translational regulation in response to envelope stress, environmental stress and changes in metabolite concentrations. Also binds with high specificity to tRNAs. This Ruegeria sp. (strain TM1040) (Silicibacter sp.) protein is RNA-binding protein Hfq.